The sequence spans 109 residues: Large ribosomal subunit protein uL22 (109 aa).

Residues Ala84–Thr95 are compositionally biased toward basic residues. The tract at residues Ala84–Ala109 is disordered.

This sequence belongs to the universal ribosomal protein uL22 family. Part of the 50S ribosomal subunit.

This protein binds specifically to 23S rRNA; its binding is stimulated by other ribosomal proteins, e.g. L4, L17, and L20. It is important during the early stages of 50S assembly. It makes multiple contacts with different domains of the 23S rRNA in the assembled 50S subunit and ribosome. Functionally, the globular domain of the protein is located near the polypeptide exit tunnel on the outside of the subunit, while an extended beta-hairpin is found that lines the wall of the exit tunnel in the center of the 70S ribosome. The chain is Large ribosomal subunit protein uL22 from Campylobacter hominis (strain ATCC BAA-381 / DSM 21671 / CCUG 45161 / LMG 19568 / NCTC 13146 / CH001A).